The sequence spans 222 residues: UPF0758 protein Cag_1513 (222 aa).

An MPN domain is found at 100–222 (KIMAAGDVFE…WYSFRERGLL (123 aa)). Positions 171, 173, and 184 each coordinate Zn(2+). The short motif at 171-184 (HNHPSGDVNPSNAD) is the JAMM motif element.

Belongs to the UPF0758 family.

The protein is UPF0758 protein Cag_1513 of Chlorobium chlorochromatii (strain CaD3).